The sequence spans 382 residues: Lycopene beta-cyclase (382 aa).

6-36 (DLILVGAGLANGLIALRLQQQQPDMRILLID) provides a ligand contact to NAD(+).

It belongs to the lycopene cyclase family. Requires FAD as cofactor.

Its subcellular location is the cell inner membrane. It carries out the reaction a carotenoid psi-end group = a carotenoid beta-end derivative. The enzyme catalyses all-trans-lycopene = gamma-carotene. The catalysed reaction is gamma-carotene = all-trans-beta-carotene. It catalyses the reaction all-trans-neurosporene = beta-zeacarotene. It carries out the reaction beta-zeacarotene = 7,8-dihydro-beta-carotene. It participates in carotenoid biosynthesis; beta-carotene biosynthesis. With respect to regulation, activity is increased in the presence of NAD(P)H. NADPH is not involved directly in the cyclization reaction, but must play an indirect role, e.g. as an allosteric activator. In terms of biological role, catalyzes the double cyclization reaction which converts lycopene to beta-carotene. Also catalyzes the double cyclization reaction which converts neurosporene to 7,8-dihydro-beta-carotene via monocyclic beta-zeacarotene. May also convert zeta-carotene to bicyclic 7,8,7',8'-tetrahydro-beta-carotene. The chain is Lycopene beta-cyclase from Pantoea ananas (Erwinia uredovora).